The sequence spans 312 residues: Aminoacyl tRNA synthase complex-interacting multifunctional protein 1 (312 aa).

Met1 is subject to N-acetylmethionine. Ala2 bears the N-acetylalanine mark. The tract at residues 6–46 is required for fibroblast proliferation; that stretch reads AVLKRLEQKGAEADQIIEYLKQQVSLLKEKAILQATLREEK. The segment at 54 to 194 is interaction with HSP90B1; it reads KLKKEIEELK…APRTVVSGLV (141 aa). A required for endothelial cell death region spans residues 101 to 114; sequence AVTTVSSGTKEQIK. The segment at 107 to 147 is disordered; that stretch reads SGTKEQIKGGTGDEKKAKEKIEKKGEKKEKKQQSIAGSADS. Residues 111-138 are compositionally biased toward basic and acidic residues; sequence EQIKGGTGDEKKAKEKIEKKGEKKEKKQ. Residues 114–192 form a required for endothelial cell migration region; it reads KGGTGDEKKA…EIAPRTVVSG (79 aa). Residue Lys137 forms a Glycyl lysine isopeptide (Lys-Gly) (interchain with G-Cter in SUMO1) linkage. Phosphoserine is present on Ser140. A tRNA-binding domain is found at 151–252; it reads DVSRLDLRIG…NGSVPGDRIT (102 aa). The residue at position 269 (Lys269) is an N6-succinyllysine.

As to quaternary structure, homodimer. Part of the multisynthetase complex (MSC), a multisubunit complex that groups tRNA ligases for Arg (RARS1), Asp (DARS1), Gln (QARS1), Ile (IARS1), Leu (LARS1), Lys (KARS1), Met (MARS1) the bifunctional ligase for Glu and Pro (EPRS1) and the auxiliary subunits AIMP1/p43, AIMP2/p38 and EEF1E1/p18. Interacts (via N-terminus) with RARS1 (via N-terminus). Part of a complex composed of RARS1, QARS1 and AIMP1. Interacts (via C-terminus) with SMURF2. Interacts (via N-terminus) with HSP90B1/gp96 (via C-terminus). Interacts with PSMA7. Interacts with TARS3. In terms of processing, cleaved by caspase-7 in response to apoptosis to produce EMAP-II.

It is found in the nucleus. Its subcellular location is the cytoplasm. The protein localises to the cytosol. The protein resides in the secreted. It localises to the endoplasmic reticulum. It is found in the golgi apparatus. Functionally, non-catalytic component of the multisynthase complex. Stimulates the catalytic activity of cytoplasmic arginyl-tRNA synthase. Binds tRNA. Possesses inflammatory cytokine activity. Negatively regulates TGF-beta signaling through stabilization of SMURF2 by binding to SMURF2 and inhibiting its SMAD7-mediated degradation. Involved in glucose homeostasis through induction of glucagon secretion at low glucose levels. Promotes dermal fibroblast proliferation and wound repair. Regulates KDELR1-mediated retention of HSP90B1/gp96 in the endoplasmic reticulum. Plays a role in angiogenesis by inducing endothelial cell migration at low concentrations and endothelian cell apoptosis at high concentrations. Induces maturation of dendritic cells and monocyte cell adhesion. Modulates endothelial cell responses by degrading HIF-1A through interaction with PSMA7. The chain is Aminoacyl tRNA synthase complex-interacting multifunctional protein 1 (AIMP1) from Homo sapiens (Human).